The sequence spans 360 residues: Coiled-coil domain-containing protein 86 (360 aa).

A compositionally biased stretch (basic residues) spans 1 to 12 (MDTPLRRSRRLG). 2 disordered regions span residues 1–314 (MDTP…ENER) and 328–360 (LKRA…AAKI). Phosphoserine occurs at positions 21, 24, 47, 50, and 58. Threonine 65 carries the post-translational modification Phosphothreonine. Phosphoserine occurs at positions 66, 69, 80, 91, 102, 110, 113, and 128. A compositionally biased stretch (polar residues) spans 66–83 (SPGSPRLQQGSGLESPQG). Over residues 153–164 (QLPPVPGSPEPY) the composition is skewed to pro residues. Phosphoserine is present on residues serine 188, serine 217, and serine 218. Positions 238-254 (GKPKSGRVWKDRSKKRF) are enriched in basic residues. Residues 272–323 (KERQERKLAKDFARHLEEEKERRRQEKKQRRAENLKRRLENERKAEVVQVIR) are a coiled coil. Basic and acidic residues-rich tracts occupy residues 273 to 295 (ERQE…ERRR) and 302 to 314 (RAEN…ENER). Arginine 342 bears the Citrulline mark.

Post-translationally, citrullinated by PADI4.

It is found in the nucleus. It localises to the chromosome. The protein localises to the nucleolus. In terms of biological role, required for proper chromosome segregation during mitosis and error-free mitotic progression. The sequence is that of Coiled-coil domain-containing protein 86 from Pongo abelii (Sumatran orangutan).